We begin with the raw amino-acid sequence, 198 residues long: Nucleoside triphosphate pyrophosphatase (198 aa).

The Proton acceptor role is filled by Asp70.

This sequence belongs to the Maf family. It depends on a divalent metal cation as a cofactor.

It is found in the cytoplasm. The enzyme catalyses a ribonucleoside 5'-triphosphate + H2O = a ribonucleoside 5'-phosphate + diphosphate + H(+). It catalyses the reaction a 2'-deoxyribonucleoside 5'-triphosphate + H2O = a 2'-deoxyribonucleoside 5'-phosphate + diphosphate + H(+). Its function is as follows. Nucleoside triphosphate pyrophosphatase. May have a dual role in cell division arrest and in preventing the incorporation of modified nucleotides into cellular nucleic acids. The protein is Nucleoside triphosphate pyrophosphatase of Thermosynechococcus vestitus (strain NIES-2133 / IAM M-273 / BP-1).